Here is a 386-residue protein sequence, read N- to C-terminus: Succinate--CoA ligase [ADP-forming] subunit beta (386 aa).

The ATP-grasp domain maps to K9 to E244. ATP is bound by residues K46, G53–G55, E99, A102, and E107. N199 and D213 together coordinate Mg(2+). Substrate is bound by residues N264 and G321 to M323.

Belongs to the succinate/malate CoA ligase beta subunit family. In terms of assembly, heterotetramer of two alpha and two beta subunits. It depends on Mg(2+) as a cofactor.

It catalyses the reaction succinate + ATP + CoA = succinyl-CoA + ADP + phosphate. The catalysed reaction is GTP + succinate + CoA = succinyl-CoA + GDP + phosphate. Its pathway is carbohydrate metabolism; tricarboxylic acid cycle; succinate from succinyl-CoA (ligase route): step 1/1. Its function is as follows. Succinyl-CoA synthetase functions in the citric acid cycle (TCA), coupling the hydrolysis of succinyl-CoA to the synthesis of either ATP or GTP and thus represents the only step of substrate-level phosphorylation in the TCA. The beta subunit provides nucleotide specificity of the enzyme and binds the substrate succinate, while the binding sites for coenzyme A and phosphate are found in the alpha subunit. The chain is Succinate--CoA ligase [ADP-forming] subunit beta from Delftia acidovorans (strain DSM 14801 / SPH-1).